We begin with the raw amino-acid sequence, 457 residues long: Fibrinogen C domain-containing protein 1-B (457 aa).

The tract at residues 1–21 is disordered; the sequence is MGSDRWKNIRGTPQMEDSVQE. Residues 1 to 33 are Cytoplasmic-facing; it reads MGSDRWKNIRGTPQMEDSVQEKSQRKGCGYILC. A helical; Signal-anchor for type II membrane protein transmembrane segment spans residues 34–54; that stretch reads TVLLSVAVLLAVTVTGAVLFM. Over 55–457 the chain is Extracellular; it reads NQYHAPSTEP…MKIRPQREEN (403 aa). The 224-residue stretch at 231–454 folds into the Fibrinogen C-terminal domain; it reads CANGSKPRDC…FTEMKIRPQR (224 aa). The N-linked (GlcNAc...) asparagine glycan is linked to asparagine 233. Cysteine 240 and cysteine 269 are disulfide-bonded. Asparagine 336 carries an N-linked (GlcNAc...) asparagine glycan. 2 residues coordinate Ca(2+): aspartate 389 and aspartate 391. A disulfide bridge links cysteine 397 with cysteine 410.

As to quaternary structure, homotetramer; disulfide-linked.

Its subcellular location is the membrane. Functionally, acetyl group-binding receptor which shows a calcium-dependent binding to acetylated structures such as chitin, some N-acetylated carbohydrates, and amino acids. This chain is Fibrinogen C domain-containing protein 1-B (fibcd1-b), found in Xenopus laevis (African clawed frog).